Reading from the N-terminus, the 300-residue chain is Geranylgeranyl pyrophosphate synthase (300 aa).

Position 1 is an N-acetylmethionine (M1). 3 residues coordinate isopentenyl diphosphate: K25, R28, and H57. D64 and D68 together coordinate Mg(2+). R73 provides a ligand contact to dimethylallyl diphosphate. Isopentenyl diphosphate is bound at residue R74. The dimethylallyl diphosphate site is built by K151, T152, Q185, K202, and K212.

The protein belongs to the FPP/GGPP synthase family. In terms of assembly, homohexamer; trimer of homodimers. The cofactor is Mg(2+).

Its subcellular location is the cytoplasm. It is found in the perinuclear region. It localises to the myofibril. The protein localises to the sarcomere. The protein resides in the z line. It catalyses the reaction isopentenyl diphosphate + dimethylallyl diphosphate = (2E)-geranyl diphosphate + diphosphate. The enzyme catalyses isopentenyl diphosphate + (2E)-geranyl diphosphate = (2E,6E)-farnesyl diphosphate + diphosphate. It carries out the reaction isopentenyl diphosphate + (2E,6E)-farnesyl diphosphate = (2E,6E,10E)-geranylgeranyl diphosphate + diphosphate. It functions in the pathway isoprenoid biosynthesis; farnesyl diphosphate biosynthesis; farnesyl diphosphate from geranyl diphosphate and isopentenyl diphosphate: step 1/1. The protein operates within isoprenoid biosynthesis; geranyl diphosphate biosynthesis; geranyl diphosphate from dimethylallyl diphosphate and isopentenyl diphosphate: step 1/1. Its pathway is isoprenoid biosynthesis; geranylgeranyl diphosphate biosynthesis; geranylgeranyl diphosphate from farnesyl diphosphate and isopentenyl diphosphate: step 1/1. In terms of biological role, catalyzes the trans-addition of the three molecules of isopentenyl diphosphate (IPP) onto dimethylallyl pyrophosphate (DMAPP) to form geranylgeranyl pyrophosphate, an important precursor of carotenoids and geranylated proteins. This is Geranylgeranyl pyrophosphate synthase from Mus musculus (Mouse).